The chain runs to 345 residues: tRNA N6-adenosine threonylcarbamoyltransferase (345 aa).

Fe cation-binding residues include histidine 113 and histidine 117. Substrate contacts are provided by residues alanine 142–glycine 146, aspartate 175, glycine 188, aspartate 192, and asparagine 282. A Fe cation-binding site is contributed by aspartate 310.

It belongs to the KAE1 / TsaD family. It depends on Fe(2+) as a cofactor.

The protein localises to the cytoplasm. It carries out the reaction L-threonylcarbamoyladenylate + adenosine(37) in tRNA = N(6)-L-threonylcarbamoyladenosine(37) in tRNA + AMP + H(+). Required for the formation of a threonylcarbamoyl group on adenosine at position 37 (t(6)A37) in tRNAs that read codons beginning with adenine. Is involved in the transfer of the threonylcarbamoyl moiety of threonylcarbamoyl-AMP (TC-AMP) to the N6 group of A37, together with TsaE and TsaB. TsaD likely plays a direct catalytic role in this reaction. The chain is tRNA N6-adenosine threonylcarbamoyltransferase from Bdellovibrio bacteriovorus (strain ATCC 15356 / DSM 50701 / NCIMB 9529 / HD100).